The sequence spans 377 residues: Nuclear pore complex protein NUP54 (377 aa).

Residues 1 to 18 (MFGTPSSSPSFGTPSSTP) are compositionally biased toward low complexity. The tract at residues 1 to 104 (MFGTPSSSPS…NTAQQQQQTP (104 aa)) is disordered. A run of 7 repeats spans residues 2–3 (FG), 11–12 (FG), 20–21 (FG), 27–28 (FG), 36–37 (FG), 49–50 (FG), and 87–88 (FG). The tract at residues 2–88 (FGTPSSSPSF…FQQQPSSNFG (87 aa)) is 7 X 2 AA repeats of F-G. Residues 19-32 (AFGTSSPAFGTPSA) are compositionally biased toward polar residues. Residues 39-104 (PSNPSFSSGG…NTAQQQQQTP (66 aa)) show a composition bias toward low complexity.

This sequence belongs to the NUP54 family. In terms of assembly, part of the nuclear pore complex (NPC). The NPC has an eight-fold symmetrical structure comprising a central transport channel and two rings, the cytoplasmic and nuclear rings, to which eight filaments are attached. The cytoplasmic filaments have loose ends, while the nuclear filaments are joined in a distal ring, forming a nuclear basket. NPCs are highly dynamic in configuration and composition, and can be devided in 3 subcomplexes, the NUP62 subcomplex, the NUP107-160 subcomplex and the NUP93 subcomplex, containing approximately 30 different nucleoporin proteins.

The protein localises to the nucleus envelope. It localises to the nucleus. It is found in the nuclear pore complex. The protein is Nuclear pore complex protein NUP54 of Arabidopsis thaliana (Mouse-ear cress).